A 465-amino-acid polypeptide reads, in one-letter code: Glutamate--tRNA ligase (465 aa).

A 'HIGH' region motif is present at residues 11–21 (PSPTGFIHLGN). Basic and acidic residues predominate over residues 120-131 (KPRYDGTWRPEP). The interval 120-139 (KPRYDGTWRPEPGKVLPTPP) is disordered. A 'KMSKS' region motif is present at residues 243-247 (KMSKR). Residue Lys246 participates in ATP binding.

This sequence belongs to the class-I aminoacyl-tRNA synthetase family. Glutamate--tRNA ligase type 1 subfamily. In terms of assembly, monomer.

It is found in the cytoplasm. It carries out the reaction tRNA(Glu) + L-glutamate + ATP = L-glutamyl-tRNA(Glu) + AMP + diphosphate. In terms of biological role, catalyzes the attachment of glutamate to tRNA(Glu) in a two-step reaction: glutamate is first activated by ATP to form Glu-AMP and then transferred to the acceptor end of tRNA(Glu). The sequence is that of Glutamate--tRNA ligase from Ralstonia nicotianae (strain ATCC BAA-1114 / GMI1000) (Ralstonia solanacearum).